The chain runs to 368 residues: 3-dehydroquinate synthase (368 aa).

Residues 71–76, 105–109, 129–130, K142, K151, and 169–172 contribute to the NAD(+) site; these read DGEAFK, GVVGD, TT, and TLRT. The Zn(2+) site is built by E184, H247, and H264.

This sequence belongs to the sugar phosphate cyclases superfamily. Dehydroquinate synthase family. It depends on Co(2+) as a cofactor. The cofactor is Zn(2+). NAD(+) serves as cofactor.

The protein localises to the cytoplasm. The enzyme catalyses 7-phospho-2-dehydro-3-deoxy-D-arabino-heptonate = 3-dehydroquinate + phosphate. It participates in metabolic intermediate biosynthesis; chorismate biosynthesis; chorismate from D-erythrose 4-phosphate and phosphoenolpyruvate: step 2/7. Catalyzes the conversion of 3-deoxy-D-arabino-heptulosonate 7-phosphate (DAHP) to dehydroquinate (DHQ). The protein is 3-dehydroquinate synthase of Cupriavidus pinatubonensis (strain JMP 134 / LMG 1197) (Cupriavidus necator (strain JMP 134)).